A 372-amino-acid polypeptide reads, in one-letter code: 4-hydroxy-3-methylbut-2-en-1-yl diphosphate synthase (flavodoxin) (372 aa).

[4Fe-4S] cluster is bound by residues C270, C273, C305, and E312.

It belongs to the IspG family. Requires [4Fe-4S] cluster as cofactor.

The catalysed reaction is (2E)-4-hydroxy-3-methylbut-2-enyl diphosphate + oxidized [flavodoxin] + H2O + 2 H(+) = 2-C-methyl-D-erythritol 2,4-cyclic diphosphate + reduced [flavodoxin]. The protein operates within isoprenoid biosynthesis; isopentenyl diphosphate biosynthesis via DXP pathway; isopentenyl diphosphate from 1-deoxy-D-xylulose 5-phosphate: step 5/6. Converts 2C-methyl-D-erythritol 2,4-cyclodiphosphate (ME-2,4cPP) into 1-hydroxy-2-methyl-2-(E)-butenyl 4-diphosphate. The sequence is that of 4-hydroxy-3-methylbut-2-en-1-yl diphosphate synthase (flavodoxin) from Alcanivorax borkumensis (strain ATCC 700651 / DSM 11573 / NCIMB 13689 / SK2).